The primary structure comprises 307 residues: UPF0282 protein PH1002 (307 aa).

Belongs to the UPF0282 family.

The protein is UPF0282 protein PH1002 of Pyrococcus horikoshii (strain ATCC 700860 / DSM 12428 / JCM 9974 / NBRC 100139 / OT-3).